The sequence spans 124 residues: Fluoride-specific ion channel FluC (124 aa).

Transmembrane regions (helical) follow at residues 4–24, 32–52, 68–88, and 101–121; these read ILAI…LAGG, AFPW…GLIM, GLTI…YETF, and LNVL…IMAA. Na(+) is bound by residues glycine 75 and threonine 78.

This sequence belongs to the fluoride channel Fluc/FEX (TC 1.A.43) family.

Its subcellular location is the cell inner membrane. It carries out the reaction fluoride(in) = fluoride(out). With respect to regulation, na(+) is not transported, but it plays an essential structural role and its presence is essential for fluoride channel function. Functionally, fluoride-specific ion channel. Important for reducing fluoride concentration in the cell, thus reducing its toxicity. The polypeptide is Fluoride-specific ion channel FluC (Geobacter sulfurreducens (strain ATCC 51573 / DSM 12127 / PCA)).